A 294-amino-acid polypeptide reads, in one-letter code: UDP-3-O-acyl-N-acetylglucosamine deacetylase (294 aa).

Residues histidine 75, histidine 232, and aspartate 236 each coordinate Zn(2+). The active-site Proton donor is the histidine 259.

This sequence belongs to the LpxC family. Requires Zn(2+) as cofactor.

It carries out the reaction a UDP-3-O-[(3R)-3-hydroxyacyl]-N-acetyl-alpha-D-glucosamine + H2O = a UDP-3-O-[(3R)-3-hydroxyacyl]-alpha-D-glucosamine + acetate. Its pathway is glycolipid biosynthesis; lipid IV(A) biosynthesis; lipid IV(A) from (3R)-3-hydroxytetradecanoyl-[acyl-carrier-protein] and UDP-N-acetyl-alpha-D-glucosamine: step 2/6. Catalyzes the hydrolysis of UDP-3-O-myristoyl-N-acetylglucosamine to form UDP-3-O-myristoylglucosamine and acetate, the committed step in lipid A biosynthesis. The chain is UDP-3-O-acyl-N-acetylglucosamine deacetylase from Sulfurimonas denitrificans (strain ATCC 33889 / DSM 1251) (Thiomicrospira denitrificans (strain ATCC 33889 / DSM 1251)).